Reading from the N-terminus, the 153-residue chain is Deoxyuridine 5'-triphosphate nucleotidohydrolase (153 aa).

Substrate is bound by residues 71–73, asparagine 84, 88–90, and lysine 98; these read RSG and TID.

The protein belongs to the dUTPase family. Requires Mg(2+) as cofactor.

The catalysed reaction is dUTP + H2O = dUMP + diphosphate + H(+). It functions in the pathway pyrimidine metabolism; dUMP biosynthesis; dUMP from dCTP (dUTP route): step 2/2. Functionally, this enzyme is involved in nucleotide metabolism: it produces dUMP, the immediate precursor of thymidine nucleotides and it decreases the intracellular concentration of dUTP so that uracil cannot be incorporated into DNA. This is Deoxyuridine 5'-triphosphate nucleotidohydrolase from Wolbachia sp. subsp. Drosophila simulans (strain wRi).